The following is a 331-amino-acid chain: Adenosine deaminase (331 aa).

Positions 12 and 14 each coordinate Zn(2+). Substrate-binding residues include His14, Asp16, and Gly170. His197 serves as a coordination point for Zn(2+). The active-site Proton donor is Glu200. Zn(2+) is bound at residue Asp278. Asp279 is a binding site for substrate.

Belongs to the metallo-dependent hydrolases superfamily. Adenosine and AMP deaminases family. Adenosine deaminase subfamily. Requires Zn(2+) as cofactor.

The catalysed reaction is adenosine + H2O + H(+) = inosine + NH4(+). The enzyme catalyses 2'-deoxyadenosine + H2O + H(+) = 2'-deoxyinosine + NH4(+). Catalyzes the hydrolytic deamination of adenosine and 2-deoxyadenosine. The sequence is that of Adenosine deaminase from Shewanella denitrificans (strain OS217 / ATCC BAA-1090 / DSM 15013).